Reading from the N-terminus, the 426-residue chain is Serine--tRNA ligase (426 aa).

Residue 233–235 participates in L-serine binding; that stretch reads TSE. 264-266 is an ATP binding site; that stretch reads RAE. E287 lines the L-serine pocket. Position 351–354 (351–354) interacts with ATP; it reads EISS. Position 387 (S387) interacts with L-serine.

The protein belongs to the class-II aminoacyl-tRNA synthetase family. Type-1 seryl-tRNA synthetase subfamily. Homodimer. The tRNA molecule binds across the dimer.

It localises to the cytoplasm. The enzyme catalyses tRNA(Ser) + L-serine + ATP = L-seryl-tRNA(Ser) + AMP + diphosphate + H(+). It carries out the reaction tRNA(Sec) + L-serine + ATP = L-seryl-tRNA(Sec) + AMP + diphosphate + H(+). It participates in aminoacyl-tRNA biosynthesis; selenocysteinyl-tRNA(Sec) biosynthesis; L-seryl-tRNA(Sec) from L-serine and tRNA(Sec): step 1/1. In terms of biological role, catalyzes the attachment of serine to tRNA(Ser). Is also able to aminoacylate tRNA(Sec) with serine, to form the misacylated tRNA L-seryl-tRNA(Sec), which will be further converted into selenocysteinyl-tRNA(Sec). The chain is Serine--tRNA ligase from Xanthomonas euvesicatoria pv. vesicatoria (strain 85-10) (Xanthomonas campestris pv. vesicatoria).